The primary structure comprises 403 residues: F-box protein At2g40925 (403 aa).

One can recognise an F-box domain in the interval 21–71 (NRHDCEIPPDLMIEILIRLPTKSFMRFKCVSKQWSPLISGRYFCNRLFTCV).

In Arabidopsis thaliana (Mouse-ear cress), this protein is F-box protein At2g40925.